Here is a 247-residue protein sequence, read N- to C-terminus: ATP synthase subunit a, plastid (247 aa).

The next 5 membrane-spanning stretches (helical) occupy residues Phe33–Ser53, Val95–Leu115, Ile134–Leu154, Leu199–Leu219, and Gly220–Gly240.

Belongs to the ATPase A chain family. F-type ATPases have 2 components, CF(1) - the catalytic core - and CF(0) - the membrane proton channel. CF(1) has five subunits: alpha(3), beta(3), gamma(1), delta(1), epsilon(1). CF(0) has four main subunits: a, b, b' and c.

It is found in the plastid membrane. Functionally, key component of the proton channel; it plays a direct role in the translocation of protons across the membrane. This is ATP synthase subunit a, plastid from Cuscuta exaltata (Tall dodder).